Reading from the N-terminus, the 424-residue chain is Histidine--tRNA ligase (424 aa).

The protein belongs to the class-II aminoacyl-tRNA synthetase family. As to quaternary structure, homodimer.

It localises to the cytoplasm. It catalyses the reaction tRNA(His) + L-histidine + ATP = L-histidyl-tRNA(His) + AMP + diphosphate + H(+). This Shewanella denitrificans (strain OS217 / ATCC BAA-1090 / DSM 15013) protein is Histidine--tRNA ligase.